The following is a 101-amino-acid chain: Putative defensin-like protein 253 (101 aa).

Positions 1 to 23 are cleaved as a signal peptide; it reads MRFASLFVVYCTFMFLDISHVKC. 4 cysteine pairs are disulfide-bonded: C31–C84, C41–C66, C49–C76, and C64–C78.

This sequence belongs to the DEFL family.

Its subcellular location is the secreted. This Arabidopsis thaliana (Mouse-ear cress) protein is Putative defensin-like protein 253 (SCRL15).